Consider the following 399-residue polypeptide: Transcription factor UNE10 (399 aa).

2 disordered regions span residues 119-158 (QSKPGGVGSTRVGSCSDGRTMGGGKRARVAPEWSGGGSQR) and 173-228 (MGSH…RRDK). Residues 178 to 201 (NTIDDHDSVCHSRPQMEDEEEKKA) show a composition bias toward basic and acidic residues. The 50-residue stretch at 213-262 (RAAAIHNQSERKRRDKINQRMKTLQKLVPNSSKTDKASMLDEVIEYLKQL) folds into the bHLH domain.

In terms of assembly, homodimer. Associates to PTAC12/HMR/PAP5 which acts as a transcriptional coactivator. Interacts with the Pfr form of phyB but barely with that of phyA. Binds to COP1. Ubiquitinated and subsequently targeted to protein degradation by COP1 in the dark, but not in far-red light. Mainly expressed in stems, leaves, seedlings, fruits and flowers, and, to a lower extent, in roots.

Its subcellular location is the nucleus. Stabilized by phyA but destabilized by phyB. Accumulates in the dark but not in far-red light upon MG132 treatment, a 26S proteasome inhibitor (at protein level). Transcription factor binding to G-box elements (5'-CACGTG-3') in target genes promoters, particularly in far-red light but barely in the dark. Required during the fertilization of ovules by pollen. Repressor of phytochrome A-mediated far-red light responses including seed germination, suppression of hypocotyl elongation, and randomization of hypocotyl growth orientation. Does not inhibit phyB-induced red light responses. This is Transcription factor UNE10 from Arabidopsis thaliana (Mouse-ear cress).